Here is a 142-residue protein sequence, read N- to C-terminus: Hemoglobin subunit alpha (142 aa).

S1 is modified (N-acetylserine). One can recognise a Globin domain in the interval S1–R142. H58 is a binding site for O2. H88 serves as a coordination point for heme b.

This sequence belongs to the globin family. In terms of assembly, heterotetramer of two alpha chains and two beta chains. As to expression, red blood cells.

Functionally, involved in oxygen transport from gills to the various peripheral tissues. The chain is Hemoglobin subunit alpha (hba) from Catostomus clarkii (Desert sucker).